The following is a 278-amino-acid chain: 4-hydroxy-3-methylbut-2-enyl diphosphate reductase (278 aa).

Position 12 (cysteine 12) interacts with [4Fe-4S] cluster. (2E)-4-hydroxy-3-methylbut-2-enyl diphosphate is bound by residues histidine 40 and histidine 75. The dimethylallyl diphosphate site is built by histidine 40 and histidine 75. Residues histidine 40 and histidine 75 each coordinate isopentenyl diphosphate. Position 97 (cysteine 97) interacts with [4Fe-4S] cluster. Residue histidine 125 participates in (2E)-4-hydroxy-3-methylbut-2-enyl diphosphate binding. Histidine 125 contributes to the dimethylallyl diphosphate binding site. Residue histidine 125 coordinates isopentenyl diphosphate. Residue glutamate 127 is the Proton donor of the active site. Residue threonine 157 participates in (2E)-4-hydroxy-3-methylbut-2-enyl diphosphate binding. Cysteine 187 provides a ligand contact to [4Fe-4S] cluster. (2E)-4-hydroxy-3-methylbut-2-enyl diphosphate is bound by residues serine 215, serine 216, asparagine 217, and serine 258. Residues serine 215, serine 216, asparagine 217, and serine 258 each contribute to the dimethylallyl diphosphate site. Isopentenyl diphosphate is bound by residues serine 215, serine 216, asparagine 217, and serine 258.

It belongs to the IspH family. It depends on [4Fe-4S] cluster as a cofactor.

It carries out the reaction isopentenyl diphosphate + 2 oxidized [2Fe-2S]-[ferredoxin] + H2O = (2E)-4-hydroxy-3-methylbut-2-enyl diphosphate + 2 reduced [2Fe-2S]-[ferredoxin] + 2 H(+). It catalyses the reaction dimethylallyl diphosphate + 2 oxidized [2Fe-2S]-[ferredoxin] + H2O = (2E)-4-hydroxy-3-methylbut-2-enyl diphosphate + 2 reduced [2Fe-2S]-[ferredoxin] + 2 H(+). It participates in isoprenoid biosynthesis; dimethylallyl diphosphate biosynthesis; dimethylallyl diphosphate from (2E)-4-hydroxy-3-methylbutenyl diphosphate: step 1/1. The protein operates within isoprenoid biosynthesis; isopentenyl diphosphate biosynthesis via DXP pathway; isopentenyl diphosphate from 1-deoxy-D-xylulose 5-phosphate: step 6/6. Catalyzes the conversion of 1-hydroxy-2-methyl-2-(E)-butenyl 4-diphosphate (HMBPP) into a mixture of isopentenyl diphosphate (IPP) and dimethylallyl diphosphate (DMAPP). Acts in the terminal step of the DOXP/MEP pathway for isoprenoid precursor biosynthesis. This is 4-hydroxy-3-methylbut-2-enyl diphosphate reductase from Pseudothermotoga lettingae (strain ATCC BAA-301 / DSM 14385 / NBRC 107922 / TMO) (Thermotoga lettingae).